The chain runs to 243 residues: Triosephosphate isomerase (243 aa).

Position 9–11 (asparagine 9–lysine 11) interacts with substrate. The active-site Electrophile is the histidine 96. The active-site Proton acceptor is the glutamate 165. Residues glycine 171, serine 204, and glycine 225–glycine 226 contribute to the substrate site.

It belongs to the triosephosphate isomerase family. In terms of assembly, homodimer.

The protein localises to the cytoplasm. The catalysed reaction is D-glyceraldehyde 3-phosphate = dihydroxyacetone phosphate. It functions in the pathway carbohydrate biosynthesis; gluconeogenesis. It participates in carbohydrate degradation; glycolysis; D-glyceraldehyde 3-phosphate from glycerone phosphate: step 1/1. In terms of biological role, involved in the gluconeogenesis. Catalyzes stereospecifically the conversion of dihydroxyacetone phosphate (DHAP) to D-glyceraldehyde-3-phosphate (G3P). The protein is Triosephosphate isomerase of Prochlorococcus marinus (strain MIT 9211).